The following is a 144-amino-acid chain: Globin (144 aa).

Ala-1 carries the N-acetylalanine modification. One can recognise a Globin domain in the interval 1 to 144 (ALSAADAGLL…IISALQSAGK (144 aa)). His-95 lines the heme b pocket.

It belongs to the globin family. Monomer.

In Aplysia juliana (Walking sea hare), this protein is Globin.